The following is a 421-amino-acid chain: ATP-dependent RNA helicase RhlB (421 aa).

The Q motif signature appears at 9–37; sequence QKFSDFALHPQVVEALEKKRFYNCTPIQA. Residues 40-219 form the Helicase ATP-binding domain; it reads LPLTLAGRDV…FEQMNNAEYV (180 aa). Residue 53–60 participates in ATP binding; it reads AQTGTGKT. The DEAD box motif lies at 165 to 168; it reads DEAD. The 146-residue stretch at 245–390 folds into the Helicase C-terminal domain; sequence RLLQTLIEEE…VSKYNPEALM (146 aa). Residues 396 to 421 are disordered; sequence PLRLTRSRPGNGPRRAGAPRNRRRSG. Residues 402-414 are compositionally biased toward low complexity; the sequence is SRPGNGPRRAGAP.

Belongs to the DEAD box helicase family. RhlB subfamily. In terms of assembly, component of the RNA degradosome, which is a multiprotein complex involved in RNA processing and mRNA degradation.

The protein resides in the cytoplasm. The catalysed reaction is ATP + H2O = ADP + phosphate + H(+). DEAD-box RNA helicase involved in RNA degradation. Has RNA-dependent ATPase activity and unwinds double-stranded RNA. The protein is ATP-dependent RNA helicase RhlB of Salmonella dublin (strain CT_02021853).